A 328-amino-acid chain; its full sequence is Cytochrome f (328 aa).

An N-terminal signal peptide occupies residues 1-44 (MRNPDTLGLWTKTMVALRRFTVLAIATVSVFLITDLGLPQAASA). Tyrosine 45, cysteine 66, cysteine 69, and histidine 70 together coordinate heme. Residues 296 to 313 (FLVLFLAGIMLSQILLVL) traverse the membrane as a helical segment.

It belongs to the cytochrome f family. As to quaternary structure, the 4 large subunits of the cytochrome b6-f complex are cytochrome b6, subunit IV (17 kDa polypeptide, PetD), cytochrome f and the Rieske protein, while the 4 small subunits are PetG, PetL, PetM and PetN. The complex functions as a dimer. Heme is required as a cofactor.

The protein resides in the cellular thylakoid membrane. Its function is as follows. Component of the cytochrome b6-f complex, which mediates electron transfer between photosystem II (PSII) and photosystem I (PSI), cyclic electron flow around PSI, and state transitions. The protein is Cytochrome f (petA) of Synechocystis sp. (strain ATCC 27184 / PCC 6803 / Kazusa).